The sequence spans 138 residues: Basic phospholipase A2 homolog Tpu-K49a (138 aa).

The signal sequence occupies residues 1 to 16 (MRTLWIMAVLLVGVEG). 6 cysteine pairs are disulfide-bonded: Cys42–Cys131, Cys44–Cys60, Cys59–Cys111, Cys65–Cys138, Cys66–Cys104, and Cys91–Cys102. The segment at 121 to 133 (KKERINTKIFCKK) is important for membrane-damaging activities in eukaryotes and bacteria; heparin-binding.

In terms of assembly, monomer. As to expression, expressed by the venom gland.

It is found in the secreted. Its function is as follows. Snake venom phospholipase A2 homolog that lacks catalytic activity. Induces local edema a few hours after injection in the hind foot. Is myotoxic. A model of myotoxic mechanism has been proposed: an apo Lys49-PLA2 is activated by the entrance of a hydrophobic molecule (e.g. fatty acid) at the hydrophobic channel of the protein leading to a reorientation of a monomer. This reorientation causes a transition between 'inactive' to 'active' states, causing alignment of C-terminal and membrane-docking sites (MDoS) side-by-side and putting the membrane-disruption sites (MDiS) in the same plane, exposed to solvent and in a symmetric position for both monomers. The MDoS region stabilizes the toxin on membrane by the interaction of charged residues with phospholipid head groups. Subsequently, the MDiS region destabilizes the membrane with penetration of hydrophobic residues. This insertion causes a disorganization of the membrane, allowing an uncontrolled influx of ions (i.e. calcium and sodium), and eventually triggering irreversible intracellular alterations and cell death. The sequence is that of Basic phospholipase A2 homolog Tpu-K49a from Craspedocephalus puniceus (Flat-nosed pitviper).